A 338-amino-acid polypeptide reads, in one-letter code: tRNA N6-adenosine threonylcarbamoyltransferase (338 aa).

2 residues coordinate Fe cation: His-111 and His-115. Residues 134 to 138, Asp-167, Gly-180, and Asn-272 contribute to the substrate site; that span reads LVSGG. Fe cation is bound at residue Asp-300.

The protein belongs to the KAE1 / TsaD family. Fe(2+) is required as a cofactor.

Its subcellular location is the cytoplasm. It catalyses the reaction L-threonylcarbamoyladenylate + adenosine(37) in tRNA = N(6)-L-threonylcarbamoyladenosine(37) in tRNA + AMP + H(+). In terms of biological role, required for the formation of a threonylcarbamoyl group on adenosine at position 37 (t(6)A37) in tRNAs that read codons beginning with adenine. Is involved in the transfer of the threonylcarbamoyl moiety of threonylcarbamoyl-AMP (TC-AMP) to the N6 group of A37, together with TsaE and TsaB. TsaD likely plays a direct catalytic role in this reaction. This is tRNA N6-adenosine threonylcarbamoyltransferase from Shewanella putrefaciens (strain CN-32 / ATCC BAA-453).